Reading from the N-terminus, the 232-residue chain is dTTP/UTP pyrophosphatase (232 aa).

Asp-103 (proton acceptor) is an active-site residue.

Belongs to the Maf family. YhdE subfamily. A divalent metal cation is required as a cofactor.

It is found in the cytoplasm. The catalysed reaction is dTTP + H2O = dTMP + diphosphate + H(+). It catalyses the reaction UTP + H2O = UMP + diphosphate + H(+). The enzyme catalyses 5-methyl-UTP + H2O = 5-methyl-UMP + diphosphate + H(+). It carries out the reaction psi-UTP + H2O = psi-UMP + diphosphate + H(+). Nucleoside triphosphate pyrophosphatase that hydrolyzes dTTP and UTP. Can also hydrolyze the modified nucleotides 5-methyl-UTP (m(5)UTP) and pseudo-UTP. Has weak activity with CTP. May have a dual role in cell division arrest and in preventing the incorporation of modified nucleotides into cellular nucleic acids. The chain is dTTP/UTP pyrophosphatase from Saccharomyces cerevisiae (strain ATCC 204508 / S288c) (Baker's yeast).